Here is a 356-residue protein sequence, read N- to C-terminus: Tyrosine recombinase XerS (356 aa).

The 106-residue stretch at 16 to 121 (IMPWYVLDYY…ALSSLYKYLT (106 aa)) folds into the Core-binding (CB) domain. Residues 169–354 (AFLDYVDKEY…VNDEQKNALD (186 aa)) form the Tyr recombinase domain. Residues R210, K234, H306, R309, and H332 contribute to the active site. Residue Y341 is the O-(3'-phospho-DNA)-tyrosine intermediate of the active site.

The protein belongs to the 'phage' integrase family. XerS subfamily.

It is found in the cytoplasm. With respect to regulation, ftsK is required for recombination. Functionally, site-specific tyrosine recombinase, which acts by catalyzing the cutting and rejoining of the recombining DNA molecules. Essential to convert dimers of the bacterial chromosome into monomers to permit their segregation at cell division. This chain is Tyrosine recombinase XerS, found in Streptococcus equi subsp. zooepidemicus (strain MGCS10565).